The chain runs to 420 residues: Methylaspartate ammonia-lyase 1 (420 aa).

Gln173 serves as a coordination point for (2S,3S)-3-methyl-L-aspartate. Mg(2+) contacts are provided by Asp237, Glu272, and Asp306. Gln328 is a binding site for (2S,3S)-3-methyl-L-aspartate. Residue Lys330 is the Proton acceptor of the active site. Residue 359–360 (SC) coordinates (2S,3S)-3-methyl-L-aspartate.

In terms of assembly, homodimer. Mg(2+) serves as cofactor.

The catalysed reaction is (2S,3S)-3-methyl-L-aspartate = mesaconate + NH4(+). It functions in the pathway amino-acid degradation; L-glutamate degradation via mesaconate pathway; acetate and pyruvate from L-glutamate: step 2/4. Its function is as follows. Involved in the methylaspartate cycle. Catalyzes the formation of the alpha,beta-unsaturated bond by the reversible anti elimination of ammonia from L-threo-beta-methylaspartate (L-threo-(2S,3S)-3-methylaspartate) to give mesaconate. It can also catalyze the amination of fumarate and ethylfumarate, and the deamination of hydroxylamine, hydrazine, methylamine and ethylamine. This is Methylaspartate ammonia-lyase 1 from Carboxydothermus hydrogenoformans (strain ATCC BAA-161 / DSM 6008 / Z-2901).